A 366-amino-acid polypeptide reads, in one-letter code: Sec-independent protein translocase protein TatC (366 aa).

Helical transmembrane passes span 42–62 (VLAV…LFTM), 70–90 (HMPA…FIPL), 97–117 (AVFI…APGL), 134–154 (ILFY…VFGF), 179–199 (LFFA…LVIV), 207–227 (LAGF…ILTP), and 230–250 (VLSQ…GLFV). Over residues 266-279 (EAEESGAADDESDE) the composition is skewed to acidic residues. A disordered region spans residues 266 to 366 (EAEESGAADD…PSPKKPDSPV (101 aa)). 2 stretches are compositionally biased toward basic and acidic residues: residues 281-290 (VSARHAEYEA) and 301-318 (DMDK…RLES). Polar residues predominate over residues 319 to 333 (DSSASDDGPESNTAG).

Belongs to the TatC family. The Tat system comprises two distinct complexes: a TatABC complex, containing multiple copies of TatA, TatB and TatC subunits, and a separate TatA complex, containing only TatA subunits. Substrates initially bind to the TatABC complex, which probably triggers association of the separate TatA complex to form the active translocon.

The protein localises to the cell inner membrane. In terms of biological role, part of the twin-arginine translocation (Tat) system that transports large folded proteins containing a characteristic twin-arginine motif in their signal peptide across membranes. Together with TatB, TatC is part of a receptor directly interacting with Tat signal peptides. This chain is Sec-independent protein translocase protein TatC, found in Halothiobacillus neapolitanus (strain ATCC 23641 / c2) (Thiobacillus neapolitanus).